Here is a 287-residue protein sequence, read N- to C-terminus: ATP synthase gamma chain (287 aa).

It belongs to the ATPase gamma chain family. As to quaternary structure, F-type ATPases have 2 components, CF(1) - the catalytic core - and CF(0) - the membrane proton channel. CF(1) has five subunits: alpha(3), beta(3), gamma(1), delta(1), epsilon(1). CF(0) has three main subunits: a, b and c.

Its subcellular location is the cell inner membrane. Functionally, produces ATP from ADP in the presence of a proton gradient across the membrane. The gamma chain is believed to be important in regulating ATPase activity and the flow of protons through the CF(0) complex. In Marinobacter nauticus (strain ATCC 700491 / DSM 11845 / VT8) (Marinobacter aquaeolei), this protein is ATP synthase gamma chain.